A 773-amino-acid chain; its full sequence is Linolenate 9R-lipoxygenase (773 aa).

Positions 176–773 (YEWVDSKKKS…LEDLMMSINI (598 aa)) constitute a Lipoxygenase domain. The Fe cation site is built by His515, His520, and Ile773.

It belongs to the lipoxygenase family.

The enzyme catalyses (9Z,12Z,15Z)-octadecatrienoate + O2 = (9R,10E,12Z,15Z)-9-hydroperoxyoctadeca-10,12,15-trienoate. The protein operates within lipid metabolism; oxylipin biosynthesis. Its function is as follows. Catalyzes the conversion of alpha-linoleate to (9R,10E,12Z,15Z)-9-hydroperoxyoctadeca-10,12,15-trienoate in oxylipin biosynthesis. Also converts alpha-linoleate to (9R,10E,12Z)-9-hydroperoxyoctadeca-10,12-dienoate. The sequence is that of Linolenate 9R-lipoxygenase from Nostoc sp. (strain PCC 7120 / SAG 25.82 / UTEX 2576).